The sequence spans 118 residues: Acidic phospholipase A2 PA-3 (118 aa).

Intrachain disulfides connect Cys11-Cys71, Cys27-Cys117, Cys29-Cys45, Cys44-Cys98, Cys51-Cys91, Cys60-Cys84, and Cys78-Cys89. Ca(2+)-binding residues include Tyr28, Gly30, and Gly32. His48 is an active-site residue. Asp49 provides a ligand contact to Ca(2+). Asp92 is a catalytic residue.

This sequence belongs to the phospholipase A2 family. Group I subfamily. D49 sub-subfamily. Ca(2+) is required as a cofactor. As to expression, expressed by the venom gland.

It is found in the secreted. The enzyme catalyses a 1,2-diacyl-sn-glycero-3-phosphocholine + H2O = a 1-acyl-sn-glycero-3-phosphocholine + a fatty acid + H(+). Functionally, PLA2 catalyzes the calcium-dependent hydrolysis of the 2-acyl groups in 3-sn-phosphoglycerides. This Pseudechis australis (Mulga snake) protein is Acidic phospholipase A2 PA-3.